The sequence spans 276 residues: 6-chlorohydroxyquinol 1,2-dioxygenase (276 aa).

Residues Tyr157, Tyr191, His215, and His217 each coordinate Fe cation.

Belongs to the intradiol ring-cleavage dioxygenase family. The cofactor is Fe(3+).

It participates in aromatic compound metabolism. Its pathway is xenobiotic degradation. Involved in the degradation of 2,4,6-trichlorophenol (2,4,6-TCP). May catalyze the oxidation of 6-chlorohydroxyquinol (6-CHQ) to 2-chloromaleylacetate (2-CMA). This is 6-chlorohydroxyquinol 1,2-dioxygenase from Cupriavidus pinatubonensis (strain JMP 134 / LMG 1197) (Cupriavidus necator (strain JMP 134)).